Reading from the N-terminus, the 308-residue chain is MTSKLEQLKQFTTVVADTGDLDAITRLKPVDATTNPSLLLKAAAIPGYADLLEQVKADTKGNVDLACDKFAVSVGAGILKVIPGRISTEVDARLSFDEPALLKKAHQLIELYEAAGIKRDRVLIKLASTWEGIRAAEKLEKEGIQTNLTLLFSFAQAQACADAGVFLISPFVGRIYDWYKKSTGKEYIGAEDPGVQSVTRIYDYYKANGYNTVVMGASFRNIGQIEQLAGCDRLTISPELLVQLSDDQGELPRILKPGNAGEAKQQLNESQFRWAMNEDAMATEKLAEGIRQFARDQEKLEALMADKA.

The active-site Schiff-base intermediate with substrate is Lys125.

This sequence belongs to the transaldolase family. Type 1 subfamily. Homodimer.

The protein resides in the cytoplasm. It catalyses the reaction D-sedoheptulose 7-phosphate + D-glyceraldehyde 3-phosphate = D-erythrose 4-phosphate + beta-D-fructose 6-phosphate. It functions in the pathway carbohydrate degradation; pentose phosphate pathway; D-glyceraldehyde 3-phosphate and beta-D-fructose 6-phosphate from D-ribose 5-phosphate and D-xylulose 5-phosphate (non-oxidative stage): step 2/3. In terms of biological role, transaldolase is important for the balance of metabolites in the pentose-phosphate pathway. The protein is Transaldolase of Pseudomonas entomophila (strain L48).